A 498-amino-acid polypeptide reads, in one-letter code: Glycerol kinase (498 aa).

Position 12 (Thr-12) interacts with ADP. Residues Thr-12, Thr-13, and Ser-14 each contribute to the ATP site. Residue Thr-12 participates in sn-glycerol 3-phosphate binding. Arg-16 contributes to the ADP binding site. Residues Arg-82, Glu-83, and Tyr-134 each coordinate sn-glycerol 3-phosphate. Positions 82, 83, and 134 each coordinate glycerol. Phosphohistidine; by HPr is present on His-230. Asp-244 contacts sn-glycerol 3-phosphate. Residues Asp-244 and Gln-245 each coordinate glycerol. Thr-266, Gly-309, Gln-313, Gly-410, and Asn-414 together coordinate ADP. ATP contacts are provided by Thr-266, Gly-309, Gln-313, and Gly-410.

The protein belongs to the FGGY kinase family. In terms of assembly, homotetramer and homodimer (in equilibrium). In terms of processing, the phosphoenolpyruvate-dependent sugar phosphotransferase system (PTS), including enzyme I, and histidine-containing protein (HPr) are required for the phosphorylation, which leads to the activation of the enzyme.

It carries out the reaction glycerol + ATP = sn-glycerol 3-phosphate + ADP + H(+). It functions in the pathway polyol metabolism; glycerol degradation via glycerol kinase pathway; sn-glycerol 3-phosphate from glycerol: step 1/1. Activated by phosphorylation and inhibited by fructose 1,6-bisphosphate (FBP). In terms of biological role, key enzyme in the regulation of glycerol uptake and metabolism. Catalyzes the phosphorylation of glycerol to yield sn-glycerol 3-phosphate. The polypeptide is Glycerol kinase (Staphylococcus aureus (strain COL)).